The sequence spans 31 residues: MLTITSYFGFLLTALTITSALFIGLSKIRLI.

The chain crosses the membrane as a helical span at residues Ile4 to Ser26.

It belongs to the PetL family. In terms of assembly, the 4 large subunits of the cytochrome b6-f complex are cytochrome b6, subunit IV (17 kDa polypeptide, PetD), cytochrome f and the Rieske protein, while the 4 small subunits are PetG, PetL, PetM and PetN. The complex functions as a dimer.

The protein localises to the plastid. It localises to the chloroplast thylakoid membrane. Component of the cytochrome b6-f complex, which mediates electron transfer between photosystem II (PSII) and photosystem I (PSI), cyclic electron flow around PSI, and state transitions. PetL is important for photoautotrophic growth as well as for electron transfer efficiency and stability of the cytochrome b6-f complex. The sequence is that of Cytochrome b6-f complex subunit 6 from Lactuca sativa (Garden lettuce).